The primary structure comprises 141 residues: Putative ankyrin repeat protein FPV223 (141 aa).

ANK repeat units follow at residues 21 to 50 (SGRTSLHYAVLFNHKRALSFLLARGADVFK), 54 to 83 (CMCTPLYYAMLSDQRDMVTMLLHSKKYIVK), 85 to 114 (RNKLDLHNAIETGNIKVIKTLLDNGVNENS), and 118 to 140 (DGLTPLHYAVKYGNISIVKMFVI).

The chain is Putative ankyrin repeat protein FPV223 from Vertebrata (FPV).